A 115-amino-acid polypeptide reads, in one-letter code: Guanylin (115 aa).

The signal sequence occupies residues 1–23 (MNAWLLSVLCLLGALAVLVEGVT). Positions 24–100 (VQDGDLSFPL…LQRLEAIAQD (77 aa)) are excised as a propeptide. Intrachain disulfides connect Cys-69-Cys-82, Cys-104-Cys-112, and Cys-107-Cys-115.

The protein belongs to the guanylin family. Intestine and in low abundance in adrenal gland, kidney, and uterus/oviduct.

It is found in the secreted. Functionally, endogenous activator of intestinal guanylate cyclase. It stimulates this enzyme through the same receptor binding region as the heat-stable enterotoxins. This chain is Guanylin (Guca2a), found in Rattus norvegicus (Rat).